The sequence spans 102 residues: Small ribosomal subunit protein uS10 (102 aa).

The protein belongs to the universal ribosomal protein uS10 family. In terms of assembly, part of the 30S ribosomal subunit.

Functionally, involved in the binding of tRNA to the ribosomes. The chain is Small ribosomal subunit protein uS10 from Clostridium acetobutylicum (strain ATCC 824 / DSM 792 / JCM 1419 / IAM 19013 / LMG 5710 / NBRC 13948 / NRRL B-527 / VKM B-1787 / 2291 / W).